Here is an 800-residue protein sequence, read N- to C-terminus: Integrin beta-5 (800 aa).

Positions Met-1 to Gly-24 are cleaved as a signal peptide. Over Leu-25–Met-722 the chain is Extracellular. The region spanning Ile-27–Gly-76 is the PSI domain. 19 disulfide bridges follow: Cys-28-Cys-46, Cys-36-Cys-463, Cys-39-Cys-64, Cys-49-Cys-75, Cys-202-Cys-211, Cys-259-Cys-300, Cys-401-Cys-413, Cys-433-Cys-461, Cys-465-Cys-484, Cys-476-Cys-487, Cys-489-Cys-498, Cys-500-Cys-530, Cys-513-Cys-528, Cys-522-Cys-533, Cys-535-Cys-548, Cys-550-Cys-571, Cys-555-Cys-569, Cys-563-Cys-574, and Cys-576-Cys-585. One can recognise a VWFA domain in the interval Tyr-136 to Ile-378. Positions 147 and 149 each coordinate Mg(2+). Ca(2+) contacts are provided by Ser-149, Asp-152, Asp-153, and Asp-184. Positions 242, 244, 246, and 247 each coordinate Ca(2+). Residue Glu-247 participates in Mg(2+) binding. The N-linked (GlcNAc...) asparagine glycan is linked to Asn-347. Gly-362 is a binding site for Ca(2+). I-EGF domains lie at Cys-465–Glu-499, Cys-500–Glu-549, Cys-550–Asn-586, and Cys-587–Glu-626. A glycan (N-linked (GlcNAc...) asparagine) is linked at Asn-479. Asn-552 carries an N-linked (GlcNAc...) asparagine glycan. N-linked (GlcNAc...) asparagine glycosylation is present at Asn-586. Disulfide bonds link Cys-587-Cys-610, Cys-594-Cys-608, Cys-602-Cys-613, Cys-615-Cys-625, Cys-628-Cys-631, Cys-635-Cys-683, Cys-641-Cys-662, Cys-644-Cys-658, and Cys-691-Cys-715. Asn-655 and Asn-706 each carry an N-linked (GlcNAc...) asparagine glycan. Residues Thr-723 to Trp-743 traverse the membrane as a helical segment. Residues Lys-744–Asp-800 lie on the Cytoplasmic side of the membrane. Position 771 is a phosphoserine (Ser-771).

Belongs to the integrin beta chain family. Heterodimer of an alpha and a beta subunit. Beta-5 (ITGB5) associates with alpha-V (ITGAV). Interacts with MYO10. Interacts with DAB2. Integrin ITGAV:ITGB5 interacts with FBLN5 (via N-terminus). ITGAV:ITGB5 interacts with CCN3. Interacts with tensin TNS3; TNS3 also interacts with PEAK1, thus acting as an adapter molecule to bridge the association of PEAK1 with ITGB5.

Its subcellular location is the cell membrane. Its function is as follows. Integrin alpha-V/beta-5 (ITGAV:ITGB5) is a receptor for fibronectin. It recognizes the sequence R-G-D in its ligand. This chain is Integrin beta-5 (ITGB5), found in Bos taurus (Bovine).